The chain runs to 207 residues: Guanylate kinase (207 aa).

Residues 4 to 184 form the Guanylate kinase-like domain; sequence GTLYIVSAPS…ALADLHTIIR (181 aa). An ATP-binding site is contributed by 11–18; that stretch reads APSGAGKS.

The protein belongs to the guanylate kinase family.

It is found in the cytoplasm. It carries out the reaction GMP + ATP = GDP + ADP. In terms of biological role, essential for recycling GMP and indirectly, cGMP. The chain is Guanylate kinase from Photorhabdus laumondii subsp. laumondii (strain DSM 15139 / CIP 105565 / TT01) (Photorhabdus luminescens subsp. laumondii).